The sequence spans 309 residues: Porphobilinogen deaminase (309 aa).

C241 carries the S-(dipyrrolylmethanemethyl)cysteine modification.

Belongs to the HMBS family. In terms of assembly, monomer. Dipyrromethane is required as a cofactor.

It carries out the reaction 4 porphobilinogen + H2O = hydroxymethylbilane + 4 NH4(+). It functions in the pathway porphyrin-containing compound metabolism; protoporphyrin-IX biosynthesis; coproporphyrinogen-III from 5-aminolevulinate: step 2/4. Its function is as follows. Tetrapolymerization of the monopyrrole PBG into the hydroxymethylbilane pre-uroporphyrinogen in several discrete steps. In Bacillus thuringiensis (strain Al Hakam), this protein is Porphobilinogen deaminase.